Reading from the N-terminus, the 25-residue chain is Bioremediase (25 aa).

One can recognise an Alpha-carbonic anhydrase domain in the interval 1 to 25 (DFPIANGERQSPVDIDTKAVVQDPA). Residues 1 to 25 (DFPIANGERQSPVDIDTKAVVQDPA) form a disordered region.

The protein belongs to the alpha-carbonic anhydrase family. It depends on Zn(2+) as a cofactor.

Its function is as follows. Releases silica from silica-rich substances. The chain is Bioremediase from Thermoanaerobacter sp.